The sequence spans 487 residues: NADH-quinone oxidoreductase subunit N (487 aa).

14 helical membrane passes run 8-28, 35-55, 78-98, 104-124, 125-145, 159-179, 203-223, 235-255, 271-291, 297-317, 328-348, 376-396, 409-428, and 451-471; these read LIAM…MLSI, FINA…LYFV, GLVI…LVGY, EFYL…SANH, LASL…LIGY, YMLL…LLYA, ILAG…LVPF, PAPV…AVVM, LVLS…AISQ, LLGY…VAVQ, IGVY…VVSL, AVMT…GFIG, LWWL…YYYL, and ALTA…VLGI.

The protein belongs to the complex I subunit 2 family. NDH-1 is composed of 13 different subunits. Subunits NuoA, H, J, K, L, M, N constitute the membrane sector of the complex.

It localises to the cell inner membrane. The enzyme catalyses a quinone + NADH + 5 H(+)(in) = a quinol + NAD(+) + 4 H(+)(out). NDH-1 shuttles electrons from NADH, via FMN and iron-sulfur (Fe-S) centers, to quinones in the respiratory chain. The immediate electron acceptor for the enzyme in this species is believed to be ubiquinone. Couples the redox reaction to proton translocation (for every two electrons transferred, four hydrogen ions are translocated across the cytoplasmic membrane), and thus conserves the redox energy in a proton gradient. This chain is NADH-quinone oxidoreductase subunit N, found in Yersinia pseudotuberculosis serotype O:1b (strain IP 31758).